The following is a 382-amino-acid chain: Dual-specificity RNA methyltransferase RlmN (382 aa).

The active-site Proton acceptor is glutamate 95. Positions glutamate 101–aspartate 348 constitute a Radical SAM core domain. An intrachain disulfide couples cysteine 108 to cysteine 353. [4Fe-4S] cluster is bound by residues cysteine 115, cysteine 119, and cysteine 122. Residues glycine 179–glutamate 180, serine 211, serine 233–histidine 235, and asparagine 310 each bind S-adenosyl-L-methionine. The active-site S-methylcysteine intermediate is the cysteine 353.

The protein belongs to the radical SAM superfamily. RlmN family. It depends on [4Fe-4S] cluster as a cofactor.

The protein localises to the cytoplasm. The catalysed reaction is adenosine(2503) in 23S rRNA + 2 reduced [2Fe-2S]-[ferredoxin] + 2 S-adenosyl-L-methionine = 2-methyladenosine(2503) in 23S rRNA + 5'-deoxyadenosine + L-methionine + 2 oxidized [2Fe-2S]-[ferredoxin] + S-adenosyl-L-homocysteine. It carries out the reaction adenosine(37) in tRNA + 2 reduced [2Fe-2S]-[ferredoxin] + 2 S-adenosyl-L-methionine = 2-methyladenosine(37) in tRNA + 5'-deoxyadenosine + L-methionine + 2 oxidized [2Fe-2S]-[ferredoxin] + S-adenosyl-L-homocysteine. Its function is as follows. Specifically methylates position 2 of adenine 2503 in 23S rRNA and position 2 of adenine 37 in tRNAs. m2A2503 modification seems to play a crucial role in the proofreading step occurring at the peptidyl transferase center and thus would serve to optimize ribosomal fidelity. This chain is Dual-specificity RNA methyltransferase RlmN, found in Bordetella pertussis (strain Tohama I / ATCC BAA-589 / NCTC 13251).